The primary structure comprises 61 residues: Small ribosomal subunit protein uS14 (61 aa).

Zn(2+) is bound by residues cysteine 24, cysteine 27, cysteine 40, and cysteine 43.

It belongs to the universal ribosomal protein uS14 family. Zinc-binding uS14 subfamily. Part of the 30S ribosomal subunit. Contacts proteins S3 and S10. Zn(2+) is required as a cofactor.

Its function is as follows. Binds 16S rRNA, required for the assembly of 30S particles and may also be responsible for determining the conformation of the 16S rRNA at the A site. The polypeptide is Small ribosomal subunit protein uS14 (Frankia alni (strain DSM 45986 / CECT 9034 / ACN14a)).